A 927-amino-acid chain; its full sequence is Phospholipase D beta 2 (927 aa).

The 134-residue stretch at 104 to 237 folds into the C2 domain; the sequence is PFGKASLKVL…YSGARIEGTY (134 aa). Ca(2+) is bound at residue D299. The 36-residue stretch at 439–474 folds into the PLD phosphodiesterase 1 domain; sequence TIYTHHQKNLIVDADAGGNRRKIVAFVGGLDLCDGR. Active-site residues include H444, K446, and D451. H444 is an a 1,2-diacyl-sn-glycero-3-phosphate binding site. Positions 480 and 512 each coordinate Ca(2+). Residues Q640 and H778 each coordinate a 1,2-diacyl-sn-glycero-3-phosphate. The PLD phosphodiesterase 2 domain occupies 773-800; the sequence is FMIYVHSKGMVVDDEYVVIGSANINQRS. Active-site residues include H778, K780, and D785. E841 contacts Ca(2+).

This sequence belongs to the phospholipase D family. C2-PLD subfamily. Ca(2+) serves as cofactor. Expressed in stems, and to a lower amount in leaves, flowers and siliques.

The protein resides in the cytoplasm. Its subcellular location is the membrane. The catalysed reaction is a 1,2-diacyl-sn-glycero-3-phosphocholine + H2O = a 1,2-diacyl-sn-glycero-3-phosphate + choline + H(+). Its activity is regulated as follows. Inhibited by neomycin. Hydrolyzes glycerol-phospholipids at the terminal phosphodiesteric bond to generate phosphatidic acids (PA). Plays an important role in various cellular processes, including phytohormone action, vesicular trafficking, secretion, cytoskeletal arrangement, meiosis, tumor promotion, pathogenesis, membrane deterioration and senescence. Can use phosphatidylserine or N-acylphosphatidylethanolamine as substrates. This Arabidopsis thaliana (Mouse-ear cress) protein is Phospholipase D beta 2.